A 160-amino-acid chain; its full sequence is Large ribosomal subunit protein uL15 (160 aa).

Positions 1–11 are enriched in basic and acidic residues; sequence MKLNELRDNHG. The disordered stretch occupies residues 1 to 39; sequence MKLNELRDNHGARPKSKRLGRGIGSGKGKTSGKGVKGQK. Over residues 21 to 35 the composition is skewed to gly residues; that stretch reads RGIGSGKGKTSGKGV.

This sequence belongs to the universal ribosomal protein uL15 family. In terms of assembly, part of the 50S ribosomal subunit.

Binds to the 23S rRNA. The chain is Large ribosomal subunit protein uL15 from Granulibacter bethesdensis (strain ATCC BAA-1260 / CGDNIH1).